Consider the following 91-residue polypeptide: Acylphosphatase (91 aa).

Residues 4-91 (RAMVTVKGMV…GEFDDFHIAY (88 aa)) enclose the Acylphosphatase-like domain. Active-site residues include Arg19 and Asn37.

It belongs to the acylphosphatase family.

The catalysed reaction is an acyl phosphate + H2O = a carboxylate + phosphate + H(+). The sequence is that of Acylphosphatase (acyP) from Geotalea uraniireducens (strain Rf4) (Geobacter uraniireducens).